A 453-amino-acid chain; its full sequence is tRNA modification GTPase MnmE (453 aa).

Arginine 22, glutamate 79, and lysine 119 together coordinate (6S)-5-formyl-5,6,7,8-tetrahydrofolate. The TrmE-type G domain maps to 215–376 (GMKVVIAGRP…LRQHLKECMG (162 aa)). A K(+)-binding site is contributed by asparagine 225. GTP is bound by residues 225–230 (NAGKSS), 244–250 (TDIAGTT), 269–272 (DTAG), and 334–337 (NKAD). Serine 229 is a binding site for Mg(2+). 3 residues coordinate K(+): threonine 244, isoleucine 246, and threonine 249. Threonine 250 provides a ligand contact to Mg(2+). Lysine 453 is a binding site for (6S)-5-formyl-5,6,7,8-tetrahydrofolate.

This sequence belongs to the TRAFAC class TrmE-Era-EngA-EngB-Septin-like GTPase superfamily. TrmE GTPase family. As to quaternary structure, homodimer. Heterotetramer of two MnmE and two MnmG subunits. Requires K(+) as cofactor.

The protein resides in the cytoplasm. Functionally, exhibits a very high intrinsic GTPase hydrolysis rate. Involved in the addition of a carboxymethylaminomethyl (cmnm) group at the wobble position (U34) of certain tRNAs, forming tRNA-cmnm(5)s(2)U34. This chain is tRNA modification GTPase MnmE, found in Vibrio cholerae serotype O1 (strain ATCC 39541 / Classical Ogawa 395 / O395).